An 85-amino-acid polypeptide reads, in one-letter code: Putative membrane protein insertion efficiency factor (85 aa).

Belongs to the UPF0161 family.

Its subcellular location is the cell inner membrane. Could be involved in insertion of integral membrane proteins into the membrane. This Fervidobacterium nodosum (strain ATCC 35602 / DSM 5306 / Rt17-B1) protein is Putative membrane protein insertion efficiency factor.